Here is a 127-residue protein sequence, read N- to C-terminus: uncharacterized protein (127 aa).

A helical transmembrane segment spans residues 91–113; the sequence is IYLIVSIAVSILAIIAFFIFLML.

The protein resides in the membrane. This is an uncharacterized protein from Bacillus subtilis (strain 168).